Consider the following 352-residue polypeptide: Alanine racemase (352 aa).

Lys-33 acts as the Proton acceptor; specific for D-alanine in catalysis. Lys-33 is subject to N6-(pyridoxal phosphate)lysine. Arg-129 contacts substrate. Tyr-250 serves as the catalytic Proton acceptor; specific for L-alanine. Met-298 provides a ligand contact to substrate.

This sequence belongs to the alanine racemase family. It depends on pyridoxal 5'-phosphate as a cofactor.

It carries out the reaction L-alanine = D-alanine. It functions in the pathway amino-acid biosynthesis; D-alanine biosynthesis; D-alanine from L-alanine: step 1/1. Functionally, catalyzes the interconversion of L-alanine and D-alanine. May also act on other amino acids. The polypeptide is Alanine racemase (alr) (Neisseria meningitidis serogroup A / serotype 4A (strain DSM 15465 / Z2491)).